The sequence spans 86 residues: Triple QxxK/R motif-containing protein (86 aa).

Residues 51–71 form a helical membrane-spanning segment; sequence VGLVLAAILALLLAFYAFFYL.

It belongs to the TRIQK family.

The protein localises to the endoplasmic reticulum membrane. In terms of biological role, may play a role in cell growth and maintenance of cell morphology. This Homo sapiens (Human) protein is Triple QxxK/R motif-containing protein (TRIQK).